The primary structure comprises 539 residues: DnaJ homolog subfamily C member 7 homolog (539 aa).

TPR repeat units follow at residues 3–36 (HEECKTQGNNYFKQSQYMDAIRCYTQAIELSNGT), 75–108 (IKGYTRASKAYIHLAQYDQAASIIVRGLVFDPRN), 189–222 (PEYLYVRGLSLYYQNNFPLALQHFQNSLTYDPDY), 235–268 (IESKKKEGNEYFQSKNYQAAYDSFTEALSIDPKL), 273–306 (SQLYSNRAAALVHLNRISEAINDCTSAVTIDPNY), and 307–340 (GKAYIRRAQCQMKQENYEDAVRDYEKAQSLDPEN). Residues 361 to 431 (DYYKILGVSK…KKKRQYDMGQ (71 aa)) form the J domain. Residues 512–539 (MGGGFGGHSGHSHGGSRSRSSRGGNEYR) form a disordered region. Basic residues predominate over residues 521–531 (GHSHGGSRSRS).

The protein is DnaJ homolog subfamily C member 7 homolog (dnajc7) of Dictyostelium discoideum (Social amoeba).